A 397-amino-acid chain; its full sequence is uncharacterized protein (397 aa).

The next 9 helical transmembrane spans lie at 1–21 (MGAS…LMLV), 39–59 (VIQS…VVVF), 76–96 (EALS…FGVP), 103–123 (VLLF…FVGA), 124–144 (ALIE…LVMA), 194–214 (MMTP…LFAF), 219–239 (ALFG…FSLL), 255–275 (LVYL…KLML), and 301–321 (QSLT…FWSA).

The protein belongs to the TerC family.

It is found in the cell membrane. This is an uncharacterized protein from Mycobacterium tuberculosis (strain CDC 1551 / Oshkosh).